Consider the following 247-residue polypeptide: 2,3-bisphosphoglycerate-dependent phosphoglycerate mutase (247 aa).

Substrate-binding positions include 8-15 (RHGESQWN), 21-22 (TG), Arg60, 87-90 (ERHY), Lys98, 114-115 (RR), and 183-184 (GN). His9 serves as the catalytic Tele-phosphohistidine intermediate. Glu87 functions as the Proton donor/acceptor in the catalytic mechanism.

The protein belongs to the phosphoglycerate mutase family. BPG-dependent PGAM subfamily.

It carries out the reaction (2R)-2-phosphoglycerate = (2R)-3-phosphoglycerate. It functions in the pathway carbohydrate degradation; glycolysis; pyruvate from D-glyceraldehyde 3-phosphate: step 3/5. Its function is as follows. Catalyzes the interconversion of 2-phosphoglycerate and 3-phosphoglycerate. The sequence is that of 2,3-bisphosphoglycerate-dependent phosphoglycerate mutase from Chlorobium phaeobacteroides (strain BS1).